The primary structure comprises 410 residues: Phosphoglycerate kinase (410 aa).

Substrate contacts are provided by residues 19-21 (DLN), Arg-34, 57-60 (HQGK), Arg-114, and Arg-154. ATP-binding positions include Glu-332 and 358–361 (GGHS).

This sequence belongs to the phosphoglycerate kinase family. As to quaternary structure, homodimer.

The protein localises to the cytoplasm. The enzyme catalyses (2R)-3-phosphoglycerate + ATP = (2R)-3-phospho-glyceroyl phosphate + ADP. The protein operates within carbohydrate degradation; glycolysis; pyruvate from D-glyceraldehyde 3-phosphate: step 2/5. The protein is Phosphoglycerate kinase (pgk) of Pyrococcus abyssi (strain GE5 / Orsay).